A 170-amino-acid chain; its full sequence is Mitochondrial fission 1 protein A (170 aa).

The TPR repeat unit spans residues 90 to 123 (REKLYLLAVGYYRSGNYSRSRQLVDRCIEMQADW). Residues 142-162 (VIGIGITATAFGAVGLIAGGI) traverse the membrane as a helical segment.

This sequence belongs to the FIS1 family. As to quaternary structure, interacts with ARC5.

The protein resides in the mitochondrion outer membrane. Its subcellular location is the peroxisome membrane. Its function is as follows. Component of the peroxisomal and mitochondrial division machineries. Plays a role in promoting the fission of mitochondria and peroxisomes. The sequence is that of Mitochondrial fission 1 protein A (FIS1A) from Arabidopsis thaliana (Mouse-ear cress).